The following is a 165-amino-acid chain: uncharacterized protein (165 aa).

The Macro domain maps to 1-165 (MDIKVVKGSI…EAWEKVLGLR (165 aa)).

This is an uncharacterized protein from Aquifex aeolicus (strain VF5).